Here is a 503-residue protein sequence, read N- to C-terminus: UDP-N-acetylmuramoylalanine--D-glutamate ligase (503 aa).

129-135 (GTNGKTT) contacts ATP.

This sequence belongs to the MurCDEF family.

The protein resides in the cytoplasm. It catalyses the reaction UDP-N-acetyl-alpha-D-muramoyl-L-alanine + D-glutamate + ATP = UDP-N-acetyl-alpha-D-muramoyl-L-alanyl-D-glutamate + ADP + phosphate + H(+). The protein operates within cell wall biogenesis; peptidoglycan biosynthesis. Functionally, cell wall formation. Catalyzes the addition of glutamate to the nucleotide precursor UDP-N-acetylmuramoyl-L-alanine (UMA). This is UDP-N-acetylmuramoylalanine--D-glutamate ligase from Burkholderia multivorans (strain ATCC 17616 / 249).